We begin with the raw amino-acid sequence, 1060 residues long: Carbamoyl phosphate synthase large chain (1060 aa).

The tract at residues 1-401 is carboxyphosphate synthetic domain; that stretch reads MPKRQDIHKI…SLLKAVRSLE (401 aa). ATP is bound by residues Arg-129, Arg-169, Gly-175, Gly-176, Arg-208, Ile-210, Glu-215, Gly-241, Val-242, His-243, Gln-284, and Glu-298. The ATP-grasp 1 domain maps to 133 to 327; that stretch reads KNLMQKLHEP…IAKMAAKIAV (195 aa). 3 residues coordinate Mg(2+): Gln-284, Glu-298, and Asn-300. The Mn(2+) site is built by Gln-284, Glu-298, and Asn-300. The interval 402-546 is oligomerization domain; sequence VGLIHPERPA…YSTYESSTES (145 aa). The interval 547 to 929 is carbamoyl phosphate synthetic domain; that stretch reads VKSDKPSVLV…ALYKAFEAAG (383 aa). Residues 671–861 enclose the ATP-grasp 2 domain; the sequence is DQVIKSLKLP…LAQVATLAIL (191 aa). Positions 707, 746, 748, 752, 777, 778, 779, 780, 820, and 832 each coordinate ATP. Mg(2+)-binding residues include Gln-820, Glu-832, and Asn-834. Residues Gln-820, Glu-832, and Asn-834 each contribute to the Mn(2+) site. The 131-residue stretch at 930-1060 folds into the MGS-like domain; that stretch reads MHLPQFGRAL…QAFSISPIKS (131 aa). The allosteric domain stretch occupies residues 930–1060; it reads MHLPQFGRAL…QAFSISPIKS (131 aa).

This sequence belongs to the CarB family. Composed of two chains; the small (or glutamine) chain promotes the hydrolysis of glutamine to ammonia, which is used by the large (or ammonia) chain to synthesize carbamoyl phosphate. Tetramer of heterodimers (alpha,beta)4. It depends on Mg(2+) as a cofactor. Mn(2+) is required as a cofactor.

The enzyme catalyses hydrogencarbonate + L-glutamine + 2 ATP + H2O = carbamoyl phosphate + L-glutamate + 2 ADP + phosphate + 2 H(+). It carries out the reaction hydrogencarbonate + NH4(+) + 2 ATP = carbamoyl phosphate + 2 ADP + phosphate + 2 H(+). It participates in amino-acid biosynthesis; L-arginine biosynthesis; carbamoyl phosphate from bicarbonate: step 1/1. It functions in the pathway pyrimidine metabolism; UMP biosynthesis via de novo pathway; (S)-dihydroorotate from bicarbonate: step 1/3. Its function is as follows. Large subunit of the glutamine-dependent carbamoyl phosphate synthetase (CPSase). CPSase catalyzes the formation of carbamoyl phosphate from the ammonia moiety of glutamine, carbonate, and phosphate donated by ATP, constituting the first step of 2 biosynthetic pathways, one leading to arginine and/or urea and the other to pyrimidine nucleotides. The large subunit (synthetase) binds the substrates ammonia (free or transferred from glutamine from the small subunit), hydrogencarbonate and ATP and carries out an ATP-coupled ligase reaction, activating hydrogencarbonate by forming carboxy phosphate which reacts with ammonia to form carbamoyl phosphate. This chain is Carbamoyl phosphate synthase large chain, found in Lacticaseibacillus casei (strain BL23) (Lactobacillus casei).